A 129-amino-acid chain; its full sequence is Small ribosomal subunit protein uS11 (129 aa).

It belongs to the universal ribosomal protein uS11 family. As to quaternary structure, part of the 30S ribosomal subunit. Interacts with proteins S7 and S18. Binds to IF-3.

Its function is as follows. Located on the platform of the 30S subunit, it bridges several disparate RNA helices of the 16S rRNA. Forms part of the Shine-Dalgarno cleft in the 70S ribosome. This chain is Small ribosomal subunit protein uS11, found in Sphingopyxis alaskensis (strain DSM 13593 / LMG 18877 / RB2256) (Sphingomonas alaskensis).